Reading from the N-terminus, the 401-residue chain is Enolase (401 aa).

Position 154 (glutamine 154) interacts with (2R)-2-phosphoglycerate. Glutamate 197 (proton donor) is an active-site residue. The Mg(2+) site is built by aspartate 233, glutamate 274, and aspartate 301. 4 residues coordinate (2R)-2-phosphoglycerate: lysine 326, arginine 355, serine 356, and lysine 377. Lysine 326 (proton acceptor) is an active-site residue.

Belongs to the enolase family. Mg(2+) is required as a cofactor.

The protein resides in the cytoplasm. It is found in the secreted. It localises to the cell surface. It carries out the reaction (2R)-2-phosphoglycerate = phosphoenolpyruvate + H2O. Its pathway is carbohydrate degradation; glycolysis; pyruvate from D-glyceraldehyde 3-phosphate: step 4/5. In terms of biological role, catalyzes the reversible conversion of 2-phosphoglycerate (2-PG) into phosphoenolpyruvate (PEP). It is essential for the degradation of carbohydrates via glycolysis. The chain is Enolase from Thermoplasma acidophilum (strain ATCC 25905 / DSM 1728 / JCM 9062 / NBRC 15155 / AMRC-C165).